The following is a 166-amino-acid chain: Bacterial microcompartment shell protein EutK (166 aa).

The BMC domain occupies 4–88 (ALGLLEVDGM…PDDDTQWLVT (85 aa)). The region spanning 109–165 (ESADELLALLTSVRQGMTAGEVAAHFGWPLEKARNALEQLFSAGTLRKRSSRYRLKP) is the EutK-Ctail domain.

It belongs to the bacterial microcompartments protein family. In terms of assembly, monomeric in solution.

Its subcellular location is the bacterial microcompartment. It functions in the pathway amine and polyamine degradation; ethanolamine degradation. Its function is as follows. Probably a minor component of the bacterial microcompartment (BMC) shell dedicated to ethanolamine degradation. It might bind nucleic acids. This Escherichia coli (strain K12) protein is Bacterial microcompartment shell protein EutK (eutK).